Reading from the N-terminus, the 145-residue chain is Meiotically up-regulated gene 124 protein (145 aa).

2 helical membrane-spanning segments follow: residues 18-38 (IILT…CPSI) and 95-115 (FAWS…NFFL).

The protein resides in the membrane. Functionally, has a role in meiosis. This is Meiotically up-regulated gene 124 protein (mug124) from Schizosaccharomyces pombe (strain 972 / ATCC 24843) (Fission yeast).